The following is a 561-amino-acid chain: MVASSSSATASLLDQLFALTPLADSSAWIKTITVLVLLPLLAVVLNVASQLLLATPKNHPPVVFHFVPVIGSAIYYGIDPYKFFFECREKYGDVFTFVLLGRKITVALGPKGSNLVFNAKHQQVTAEDAYTHLTTPVFGKEVVYDVPNAVFMEQKKFVKVGLSIENFRVYVPQIVDEVREYIKSDARFSALKTRKTITVDIFQAMSELIILTASRTLQGKEVRQGLDKSFAQLYHDLDSGFTPINFVIPNLPLPSNFKRDRAQKKMSQFYQDIVAKRRAAGASTSADDASGENDMIAALIEQKYKNGRALSGVEIAHMMIALLMAGQHTSSATSSWAFLRLASRPEIIEELYEEQLNVYSDGHGGLRELDYETQKTSVPLLDAVVKETLRLHPPLHSIMRYVKSDLAVPPTLSSPTSTKSEPDAHYVIPKGHYIMAAPGVSQVDPQIWKSSDQFDPHRWLDATTAAAMQDSGEDKQDFGFGMISTGANSPYLPFGAGRHRCIGEQFAYLQIGVILATFVRIFKWHLDSKFPDPDYQSMVVLPSKNGCAIVLTPRAESLHLD.

Cysteine 501 lines the heme pocket.

This sequence belongs to the cytochrome P450 family. It depends on heme as a cofactor.

It is found in the membrane. The catalysed reaction is a 14alpha-methyl steroid + 3 reduced [NADPH--hemoprotein reductase] + 3 O2 = a Delta(14) steroid + formate + 3 oxidized [NADPH--hemoprotein reductase] + 4 H2O + 4 H(+). The enzyme catalyses a 14alpha-methyl steroid + reduced [NADPH--hemoprotein reductase] + O2 = a 14alpha-hydroxymethyl steroid + oxidized [NADPH--hemoprotein reductase] + H2O + H(+). It carries out the reaction a 14alpha-hydroxymethyl steroid + reduced [NADPH--hemoprotein reductase] + O2 = a 14alpha-formyl steroid + oxidized [NADPH--hemoprotein reductase] + 2 H2O + H(+). It catalyses the reaction a 14alpha-formyl steroid + reduced [NADPH--hemoprotein reductase] + O2 = a Delta(14) steroid + formate + oxidized [NADPH--hemoprotein reductase] + H2O + 2 H(+). The catalysed reaction is lanosterol + 3 reduced [NADPH--hemoprotein reductase] + 3 O2 = 4,4-dimethyl-5alpha-cholesta-8,14,24-trien-3beta-ol + formate + 3 oxidized [NADPH--hemoprotein reductase] + 4 H2O + 4 H(+). The enzyme catalyses lanosterol + reduced [NADPH--hemoprotein reductase] + O2 = 32-hydroxylanosterol + oxidized [NADPH--hemoprotein reductase] + H2O + H(+). It carries out the reaction 32-hydroxylanosterol + reduced [NADPH--hemoprotein reductase] + O2 = 32-oxolanosterol + oxidized [NADPH--hemoprotein reductase] + 2 H2O + H(+). It catalyses the reaction 32-oxolanosterol + reduced [NADPH--hemoprotein reductase] + O2 = 4,4-dimethyl-5alpha-cholesta-8,14,24-trien-3beta-ol + formate + oxidized [NADPH--hemoprotein reductase] + H2O + 2 H(+). The catalysed reaction is eburicol + 3 reduced [NADPH--hemoprotein reductase] + 3 O2 = 14-demethyleburicol + formate + 3 oxidized [NADPH--hemoprotein reductase] + 4 H2O + 4 H(+). The enzyme catalyses eburicol + reduced [NADPH--hemoprotein reductase] + O2 = 32-hydroxyeburicol + oxidized [NADPH--hemoprotein reductase] + H2O + H(+). It carries out the reaction 32-hydroxyeburicol + reduced [NADPH--hemoprotein reductase] + O2 = 32-oxoeburicol + oxidized [NADPH--hemoprotein reductase] + 2 H2O + H(+). It catalyses the reaction 32-oxoeburicol + reduced [NADPH--hemoprotein reductase] + O2 = 14-demethyleburicol + formate + oxidized [NADPH--hemoprotein reductase] + H2O + 2 H(+). Its pathway is steroid biosynthesis; zymosterol biosynthesis; zymosterol from lanosterol: step 1/6. Functionally, sterol 14alpha-demethylase that plays a critical role in the third module of ergosterol biosynthesis pathway, being ergosterol the major sterol component in fungal membranes that participates in a variety of functions. The third module or late pathway involves the ergosterol synthesis itself through consecutive reactions that mainly occur in the endoplasmic reticulum (ER) membrane. In filamentous fungi, during the initial step of this module, lanosterol (lanosta-8,24-dien-3beta-ol) can be metabolized to eburicol. Sterol 14alpha-demethylase catalyzes the three-step oxidative removal of the 14alpha-methyl group (C-32) of both these sterols in the form of formate, and converts eburicol and lanosterol to 14-demethyleburicol (4,4,24-trimethylergosta-8,14,24(28)-trienol) and 4,4-dimethyl-5alpha-cholesta-8,14,24-trien-3beta-ol, respectively, which are further metabolized by other enzymes in the pathway to ergosterol. Can also use substrates not intrinsic to fungi, such as 24,25-dihydrolanosterol (DHL), producing 4,4-dimethyl-8,14-cholestadien-3-beta-ol, but at lower rates than the endogenous substrates. This Mycosarcoma maydis (Corn smut fungus) protein is Lanosterol 14-alpha demethylase (ERG11).